Consider the following 77-residue polypeptide: Chassatide C13 (77 aa).

The first 24 residues, 1-24 (MAKFATQLLLFVLIASLVMLEVHA), serve as a signal peptide directing secretion. Positions 25-44 (SNTFQVPDLGKRLLMNRDPN) are cleaved as a propeptide — removed in mature form. The cyclopeptide (Gly-Asn) cross-link spans 45 to 75 (GFPCAESCVYIPCTVTALLGCSCRNRVCYRN). 3 disulfides stabilise this stretch: Cys-48–Cys-65, Cys-52–Cys-67, and Cys-57–Cys-72. Positions 76-77 (EL) are cleaved as a propeptide — removed in mature form.

Post-translationally, this is a cyclic peptide. As to expression, expressed in fruit and pedicel but not in root, leaf and stem (at protein level).

Probably participates in a plant defense mechanism. The polypeptide is Chassatide C13 (Chassalia chartacea (Chassalia curviflora)).